The primary structure comprises 2603 residues: Protein SABRE (2603 aa).

Residues 1–35 (MAASPAKFFFGFLIVSIVLWMIFMLFAWMLSRVLG) form the signal peptide. A glycan (N-linked (GlcNAc...) asparagine) is linked at Asn196. Residues 259–287 (FPKSKQSSASLRSDEVRTSATAASSAKKP) form a disordered region. N-linked (GlcNAc...) asparagine glycosylation is found at Asn331, Asn486, Asn597, Asn807, Asn867, Asn887, Asn1154, Asn1249, Asn1280, and Asn1408. The interval 786–814 (PESGCNKGISSVKDGGPSEKINQSNSVNK) is disordered. The segment at 1416–1436 (FHQSPSSTEHPTDVGTVYSSQ) is disordered. N-linked (GlcNAc...) asparagine glycans are attached at residues Asn1492 and Asn1659. Disordered regions lie at residues 1656 to 1676 (EFEN…DDDG) and 1717 to 1777 (EPPK…DDIG). Residues 1731 to 1748 (KIHEENQKESCPETHQGE) show a composition bias toward basic and acidic residues. Polar residues predominate over residues 1749–1766 (MSRSSASPGRNLPSSPSH). A coiled-coil region spans residues 1995 to 2023 (VEEVELAKINLEEKERERKLLLDDIRKLS). Asn2333 carries an N-linked (GlcNAc...) asparagine glycan. Disordered stretches follow at residues 2339–2380 (EQQE…RPRK), 2448–2479 (GKKF…KPDQ), and 2554–2603 (IRRH…DFRE). A compositionally biased stretch (basic and acidic residues) spans 2343-2380 (DFSKQKVKEIKPVKSGRSSHEEKKAGKSHEEKKSRPRK). The N-linked (GlcNAc...) asparagine glycan is linked to Asn2467. Positions 2554 to 2565 (IRRHTKKFRPRS) are enriched in basic residues. The span at 2566-2583 (QRGSTSQQRESLPSSPIE) shows a compositional bias: polar residues. Residues 2586-2603 (PFESGYSSGSSPYEDFRE) show a composition bias toward low complexity.

It belongs to the SABRE family. As to expression, highest levels in leaves, also expressed in leaves, flowers, and siliques, and, to a lower extent, in roots and stems.

Its subcellular location is the secreted. It is found in the golgi apparatus. In terms of biological role, may be involved in membrane trafficking. Required for cell expansion, especially in root cortex, probably by counteracting the action of ethylene in promoting cells radial expansion. Involved in female organ development. Antagonistically interacts with ethylene signaling to regulate plant responses to Pi starvation. This is Protein SABRE from Arabidopsis thaliana (Mouse-ear cress).